A 459-amino-acid polypeptide reads, in one-letter code: uncharacterized protein (459 aa).

A TRAM domain is found at 9–67 (KLEVGQTFPVTIKRLGINGEGVGYFKRQVVFIPGALPGEEVVAETTKIQRGFAEAKVKK). 4 residues coordinate [4Fe-4S] cluster: Cys-80, Cys-86, Cys-89, and Cys-168. 4 residues coordinate S-adenosyl-L-methionine: Gln-292, Tyr-321, Asp-342, and Asp-390. The active-site Nucleophile is the Cys-417.

It belongs to the class I-like SAM-binding methyltransferase superfamily. RNA M5U methyltransferase family.

This is an uncharacterized protein from Bacillus cereus (strain ATCC 10987 / NRS 248).